Reading from the N-terminus, the 100-residue chain is Integration host factor subunit alpha (100 aa).

This sequence belongs to the bacterial histone-like protein family. Heterodimer of an alpha and a beta chain.

Functionally, this protein is one of the two subunits of integration host factor, a specific DNA-binding protein that functions in genetic recombination as well as in transcriptional and translational control. This Ruegeria sp. (strain TM1040) (Silicibacter sp.) protein is Integration host factor subunit alpha.